We begin with the raw amino-acid sequence, 206 residues long: Large ribosomal subunit protein uL4 (206 aa).

The tract at residues 44-87 (NRQGTQSAKTRSEVSGGGRKPWRQKGTGHARQGSTRSPQWTGGG) is disordered.

It belongs to the universal ribosomal protein uL4 family. In terms of assembly, part of the 50S ribosomal subunit.

Its function is as follows. One of the primary rRNA binding proteins, this protein initially binds near the 5'-end of the 23S rRNA. It is important during the early stages of 50S assembly. It makes multiple contacts with different domains of the 23S rRNA in the assembled 50S subunit and ribosome. Forms part of the polypeptide exit tunnel. The sequence is that of Large ribosomal subunit protein uL4 from Lachnospira eligens (strain ATCC 27750 / DSM 3376 / VPI C15-48 / C15-B4) (Eubacterium eligens).